The sequence spans 1076 residues: Serine/threonine-protein phosphatase 6 regulatory ankyrin repeat subunit C (1076 aa).

ANK repeat units follow at residues 7–36, 40–69, 73–102, 106–135, 139–168, 172–201, 205–234, 238–267, 271–301, 305–334, 338–367, 371–400, 422–451, 455–484, 488–545, 549–579, 584–613, 617–646, 651–680, 687–716, 720–749, 753–782, 790–819, 822–852, 857–886, 890–920, 924–953, and 960–989; these read TDQP…NINV, ERRT…NVNA, LWLT…DVNA, LWQT…SLNV, SGRS…SLNV, KERQ…DLGC, KGYG…EIDE, FGNT…NVNQ, KGFT…DVNY, EGKS…EIDC, FGNT…DTAR, HDMF…LYSI, LGRT…DLRR, FGRT…GVNE, KGCS…DPSL, QGYT…CLED, IPVS…NLDV, KGRT…SALI, RKWT…RADI, YGQT…TADA, RGRT…FVLC, KGRT…STDP, SGYS…FSYL, NPFT…KIVN, KGRT…EVNA, TGRT…DLTV, NKNT…DLGL, and ALQM…TVLA. Basic and acidic residues predominate over residues 502-514; it reads YRRAEPHTPSSHD. A disordered region spans residues 502-522; the sequence is YRRAEPHTPSSHDAEEDEPLK. Phosphoserine is present on residues serine 1028 and serine 1075.

As to quaternary structure, protein phosphatase 6 (PP6) holoenzyme is proposed to be a heterotrimeric complex formed by the catalytic subunit, a SAPS domain-containing subunit (PP6R) and an ankyrin repeat-domain containing regulatory subunit (ARS). Interacts with PPP6R1.

Functionally, putative regulatory subunit of protein phosphatase 6 (PP6) that may be involved in the recognition of phosphoprotein substrates. This chain is Serine/threonine-protein phosphatase 6 regulatory ankyrin repeat subunit C (ANKRD52), found in Homo sapiens (Human).